Reading from the N-terminus, the 388-residue chain is Protein-glutamate methylesterase/protein-glutamine glutaminase (388 aa).

In terms of domain architecture, Response regulatory spans 20–138; sequence RVMVVDDSVV…ESAGAEVFRH (119 aa). At Asp-71 the chain carries 4-aspartylphosphate. A CheB-type methylesterase domain is found at 193 to 386; the sequence is PTAPRVLLIG…PKLVRLFSGD (194 aa). Catalysis depends on residues Ser-204, His-232, and Asp-328.

Belongs to the CheB family. In terms of processing, phosphorylated by CheA. Phosphorylation of the N-terminal regulatory domain activates the methylesterase activity.

Its subcellular location is the cytoplasm. The catalysed reaction is [protein]-L-glutamate 5-O-methyl ester + H2O = L-glutamyl-[protein] + methanol + H(+). It carries out the reaction L-glutaminyl-[protein] + H2O = L-glutamyl-[protein] + NH4(+). In terms of biological role, involved in chemotaxis. Part of a chemotaxis signal transduction system that modulates chemotaxis in response to various stimuli. Catalyzes the demethylation of specific methylglutamate residues introduced into the chemoreceptors (methyl-accepting chemotaxis proteins or MCP) by CheR. Also mediates the irreversible deamidation of specific glutamine residues to glutamic acid. The protein is Protein-glutamate methylesterase/protein-glutamine glutaminase of Rhodopseudomonas palustris (strain HaA2).